Consider the following 350-residue polypeptide: Galactokinase (350 aa).

15–18 (EHTD) serves as a coordination point for substrate. ATP contacts are provided by residues S47 and 99 to 105 (GAGLSSS). S105 and E137 together coordinate Mg(2+). Catalysis depends on D149, which acts as the Proton acceptor. Y198 provides a ligand contact to substrate.

This sequence belongs to the GHMP kinase family. GalK subfamily.

The protein resides in the cytoplasm. The catalysed reaction is alpha-D-galactose + ATP = alpha-D-galactose 1-phosphate + ADP + H(+). The protein operates within carbohydrate metabolism; galactose metabolism. Functionally, catalyzes the transfer of the gamma-phosphate of ATP to D-galactose to form alpha-D-galactose-1-phosphate (Gal-1-P). The chain is Galactokinase from Pyrococcus horikoshii (strain ATCC 700860 / DSM 12428 / JCM 9974 / NBRC 100139 / OT-3).